Here is a 593-residue protein sequence, read N- to C-terminus: Methylenetetrahydrofolate reductase (NADH) 1 (593 aa).

Glutamate 21 acts as the Proton donor/acceptor in catalysis. Residues 21-26 (EYFPPK) and 52-53 (TW) each bind NAD(+). Residues 52-53 (TW), histidine 81, 111-113 (RGD), tyrosine 153, 157-160 (HPDA), aspartate 175, and lysine 182 contribute to the FAD site. Aspartate 113 lines the substrate pocket. 2 residues coordinate substrate: glutamine 193 and tyrosine 285.

Belongs to the methylenetetrahydrofolate reductase family. In terms of assembly, homodimer. It depends on FAD as a cofactor.

It carries out the reaction (6S)-5-methyl-5,6,7,8-tetrahydrofolate + NAD(+) = (6R)-5,10-methylene-5,6,7,8-tetrahydrofolate + NADH + H(+). Its pathway is one-carbon metabolism; tetrahydrofolate interconversion. Its activity is regulated as follows. Plant MTHFRs strongly prefer NADH over NADPH. Not inhibited by methionine or S-adenosylmethionine. Functionally, the probable reversibility of the MTHFR reaction in plants suggests that they can metabolize the methyl group of 5,10-methylenetetrahydrofolate to serine, sugars and starch. The sequence is that of Methylenetetrahydrofolate reductase (NADH) 1 from Zea mays (Maize).